The sequence spans 494 residues: Gram-negative bacteria-binding protein 1 (494 aa).

The N-terminal stretch at 1 to 19 is a signal peptide; it reads MPGLCIGILLLIGFGCTTA. The CBM39 domain maps to 20–120; sequence YKIPTPTVEL…QPLPVCNLGG (101 aa). N-linked (GlcNAc...) asparagine glycosylation is found at asparagine 56 and asparagine 81. The tract at residues 126-160 is disordered; the sequence is GCSPGDDDFTDDNQLSTEDSALEPTAPSVCEPSES. One can recognise a GH16 domain in the interval 135–494; it reads TDDNQLSTED…DYVRVFATDN (360 aa). Asparagine 185 carries N-linked (GlcNAc...) asparagine glycosylation.

Belongs to the insect beta-1,3-glucan binding protein family.

It localises to the cell membrane. Plays a key role in innate immunity by acting as a pattern recognition receptor for beta-1,3-glucan from fungi and lipopolysaccharide from Gram-negative bacteria. Upon recognition of invading microorganism-derived products, acts upstream of protease spz processing enzyme SPE to activate the Toll pathway and to induce the expression of antimicrobial peptides drosomycin, cecropin and attacin. In Drosophila melanogaster (Fruit fly), this protein is Gram-negative bacteria-binding protein 1.